The primary structure comprises 48 residues: Protein YgdT (48 aa).

In Escherichia coli (strain K12), this protein is Protein YgdT (ygdT).